The sequence spans 192 residues: Adenylate kinase (192 aa).

10-15 (GAGKGT) contacts ATP. Residues 30–59 (STGDMLREAIEKETEIGKQAKIFIESGALV) form an NMP region. AMP contacts are provided by residues Thr31, Arg36, 57-59 (ALV), 85-88 (GYPR), and Gln92. An LID region spans residues 126 to 142 (KRVEEVVAVGGKIRSDD). An ATP-binding site is contributed by Arg127. AMP is bound by residues Arg139 and Arg150. Ala178 lines the ATP pocket.

It belongs to the adenylate kinase family. As to quaternary structure, monomer.

The protein resides in the cytoplasm. It catalyses the reaction AMP + ATP = 2 ADP. It participates in purine metabolism; AMP biosynthesis via salvage pathway; AMP from ADP: step 1/1. Catalyzes the reversible transfer of the terminal phosphate group between ATP and AMP. Plays an important role in cellular energy homeostasis and in adenine nucleotide metabolism. The polypeptide is Adenylate kinase (Bartonella bacilliformis (strain ATCC 35685 / KC583 / Herrer 020/F12,63)).